The following is a 557-amino-acid chain: Probable protein kinase UbiB (557 aa).

Residues 121–509 (AFDTTPLASA…RKLQTRVVTA (389 aa)) form the Protein kinase domain. ATP contacts are provided by residues 127–135 (LASASIAQV) and K154. D289 functions as the Proton acceptor in the catalytic mechanism. Helical transmembrane passes span 506–526 (VVTAITGSGLLVVAAVLYGLH) and 535–555 (VPVWSWISGGAGSAALLIAWL).

This sequence belongs to the ABC1 family. UbiB subfamily.

The protein localises to the cell inner membrane. The protein operates within cofactor biosynthesis; ubiquinone biosynthesis [regulation]. Functionally, is probably a protein kinase regulator of UbiI activity which is involved in aerobic coenzyme Q (ubiquinone) biosynthesis. The sequence is that of Probable protein kinase UbiB from Xanthomonas campestris pv. campestris (strain B100).